Reading from the N-terminus, the 491-residue chain is [Pyruvate dehydrogenase (acetyl-transferring)] kinase 2, mitochondrial (491 aa).

The region spanning 153–480 (PTIRTLEDAS…DVVLKLGNLM (328 aa)) is the Histidine kinase domain. ATP contacts are provided by residues 300-307 (EILRNTYE), aspartate 341, 359-360 (SK), and 383-446 (DEVH…GIGL).

Belongs to the PDK/BCKDK protein kinase family. As to quaternary structure, interacts with PKP1.

Its subcellular location is the mitochondrion matrix. It carries out the reaction L-seryl-[pyruvate dehydrogenase E1 alpha subunit] + ATP = O-phospho-L-seryl-[pyruvate dehydrogenase E1 alpha subunit] + ADP + H(+). In terms of biological role, inhibits the mitochondrial pyruvate dehydrogenase complex by phosphorylation of the E1 alpha subunit (PDA1), thus contributing to the regulation of glucose metabolism. This is [Pyruvate dehydrogenase (acetyl-transferring)] kinase 2, mitochondrial from Saccharomyces cerevisiae (strain ATCC 204508 / S288c) (Baker's yeast).